The following is an 83-amino-acid chain: Small ribosomal subunit protein eS27 (83 aa).

A C4-type zinc finger spans residues 37–59; the sequence is CSGCFKISTVFSHATTVVVCVGC.

The protein belongs to the eukaryotic ribosomal protein eS27 family. Zn(2+) is required as a cofactor.

In Caenorhabditis elegans, this protein is Small ribosomal subunit protein eS27 (rps-27).